A 1155-amino-acid chain; its full sequence is Eukaryotic translation initiation factor 3 subunit A (1155 aa).

A PCI domain is found at Leu-319–Thr-502. 2 disordered regions span residues Gln-589 to Gln-613 and Ala-836 to Arg-1155. Composition is skewed to basic and acidic residues over residues Ala-836–Asp-900, Asp-925–Ser-987, Ser-1004–Pro-1057, and Asp-1066–Lys-1101. A compositionally biased stretch (gly residues) spans Gly-1104–Asn-1118. Over residues Pro-1125–Asp-1145 the composition is skewed to basic and acidic residues.

This sequence belongs to the eIF-3 subunit A family. In terms of assembly, component of the eukaryotic translation initiation factor 3 (eIF-3) complex. The eIF-3 complex interacts with pix.

The protein resides in the cytoplasm. Functionally, RNA-binding component of the eukaryotic translation initiation factor 3 (eIF-3) complex, which is involved in protein synthesis of a specialized repertoire of mRNAs and, together with other initiation factors, stimulates binding of mRNA and methionyl-tRNAi to the 40S ribosome. The eIF-3 complex specifically targets and initiates translation of a subset of mRNAs involved in cell proliferation. This chain is Eukaryotic translation initiation factor 3 subunit A, found in Drosophila pseudoobscura pseudoobscura (Fruit fly).